A 210-amino-acid polypeptide reads, in one-letter code: Uracil phosphoribosyltransferase (210 aa).

5-phospho-alpha-D-ribose 1-diphosphate is bound by residues Arg78, Arg103, and 130 to 138; that span reads DPMLATGGS. Uracil contacts are provided by residues Ile193 and 198–200; that span reads GDA. Residue Asp199 participates in 5-phospho-alpha-D-ribose 1-diphosphate binding.

This sequence belongs to the UPRTase family. Requires Mg(2+) as cofactor.

It catalyses the reaction UMP + diphosphate = 5-phospho-alpha-D-ribose 1-diphosphate + uracil. It participates in pyrimidine metabolism; UMP biosynthesis via salvage pathway; UMP from uracil: step 1/1. Allosterically activated by GTP. In terms of biological role, catalyzes the conversion of uracil and 5-phospho-alpha-D-ribose 1-diphosphate (PRPP) to UMP and diphosphate. The chain is Uracil phosphoribosyltransferase from Chromobacterium violaceum (strain ATCC 12472 / DSM 30191 / JCM 1249 / CCUG 213 / NBRC 12614 / NCIMB 9131 / NCTC 9757 / MK).